A 440-amino-acid chain; its full sequence is 5-hydroxytryptamine receptor 6 (440 aa).

The Extracellular portion of the chain corresponds to 1–27 (MVPEPGPSANSTPAWGAGPPSAPGGSG). Residues 28 to 52 (WVAAALCVVIALTAAANSLLIALIC) form a helical membrane-spanning segment. Residues 53–62 (TQPALRNTSN) lie on the Cytoplasmic side of the membrane. Residues 63–88 (FFLVSLFTSDLMVGLVVMPPAMLNAL) form a helical membrane-spanning segment. Residues 89 to 96 (YGRWVLAR) are Extracellular-facing. Residues 97-122 (GLCLLWTAFDVMCCSASILNLCLISL) form a helical membrane-spanning segment. Cysteines 99 and 180 form a disulfide. A serotonin-binding site is contributed by Asp106. Residues 123-142 (DRYLLILSPLRYKLRMTPPR) are Cytoplasmic-facing. Residues 143-167 (ALALVLGAWSLAALASFLPLLLGWH) form a helical membrane-spanning segment. The Extracellular portion of the chain corresponds to 168 to 185 (ELGHARPPVPGQCRLLAS). The chain crosses the membrane as a helical span at residues 186–209 (LPFVLVASGLTFFLPSGAICFTYC). Residues 210-266 (RILLAARKQAVQVASLTTGMASQASETLQVPRTPRPGVESADSRRLATKHSRKALKA) are Cytoplasmic-facing. The helical transmembrane segment at 267–293 (SLTLGILLGMFFVTWLPFFVANIVQAV) threads the bilayer. Residue Asn288 coordinates serotonin. The Extracellular segment spans residues 294 to 299 (CDCISP). The helical transmembrane segment at 300–323 (GLFDVLTWLGYCNSTMNPIIYPLF) threads the bilayer. The Cytoplasmic portion of the chain corresponds to 324–440 (MRDFKRALGR…RPHPLGIPTN (117 aa)). The interval 346–392 (ASLASPSLRTSHSGPRPGLSLQQVLPLPLPPDSDSDSDAGSGGSSGL) is disordered. Residues 347-358 (SLASPSLRTSHS) show a composition bias toward polar residues. Low complexity predominate over residues 362 to 371 (PGLSLQQVLP).

This sequence belongs to the G-protein coupled receptor 1 family. In terms of assembly, interacts with MTOR, RPTOR and NF1. Interacts with CDK5.

The protein localises to the cell membrane. Functionally, G-protein coupled receptor for 5-hydroxytryptamine (serotonin), a biogenic hormone that functions as a neurotransmitter, a hormone and a mitogen. Also has a high affinity for tricyclic psychotropic drugs. Ligand binding causes a conformation change that triggers signaling via guanine nucleotide-binding proteins (G proteins) and modulates the activity of downstream effectors. HTR6 is coupled to G(s) G alpha proteins and mediates activation of adenylate cyclase activity. Controls pyramidal neurons migration during corticogenesis, through the regulation of CDK5 activity. Is an activator of mTOR signaling. The chain is 5-hydroxytryptamine receptor 6 (HTR6) from Pan troglodytes (Chimpanzee).